The primary structure comprises 310 residues: 4-diphosphocytidyl-2-C-methyl-D-erythritol kinase (310 aa).

The active site involves Lys10. Position 102-112 (102-112 (PVAGGMAGGSA)) interacts with ATP. Asp144 is an active-site residue. The interval 289-310 (TRTARGPAAGAQLLPGPVGSFA) is disordered.

Belongs to the GHMP kinase family. IspE subfamily.

The catalysed reaction is 4-CDP-2-C-methyl-D-erythritol + ATP = 4-CDP-2-C-methyl-D-erythritol 2-phosphate + ADP + H(+). Its pathway is isoprenoid biosynthesis; isopentenyl diphosphate biosynthesis via DXP pathway; isopentenyl diphosphate from 1-deoxy-D-xylulose 5-phosphate: step 3/6. Functionally, catalyzes the phosphorylation of the position 2 hydroxy group of 4-diphosphocytidyl-2C-methyl-D-erythritol. The chain is 4-diphosphocytidyl-2-C-methyl-D-erythritol kinase from Cutibacterium acnes (strain DSM 16379 / KPA171202) (Propionibacterium acnes).